Here is a 255-residue protein sequence, read N- to C-terminus: Phosphoribosylformylglycinamidine synthase subunit PurQ (255 aa).

The 250-residue stretch at 6–255 (TLILRTPGTN…TNAVKWARQV (250 aa)) folds into the Glutamine amidotransferase type-1 domain. Cys-96 acts as the Nucleophile in catalysis. Residues His-217 and Glu-219 contribute to the active site.

Part of the FGAM synthase complex composed of 1 PurL, 1 PurQ and 2 PurS subunits.

It localises to the cytoplasm. It catalyses the reaction N(2)-formyl-N(1)-(5-phospho-beta-D-ribosyl)glycinamide + L-glutamine + ATP + H2O = 2-formamido-N(1)-(5-O-phospho-beta-D-ribosyl)acetamidine + L-glutamate + ADP + phosphate + H(+). It carries out the reaction L-glutamine + H2O = L-glutamate + NH4(+). It functions in the pathway purine metabolism; IMP biosynthesis via de novo pathway; 5-amino-1-(5-phospho-D-ribosyl)imidazole from N(2)-formyl-N(1)-(5-phospho-D-ribosyl)glycinamide: step 1/2. Functionally, part of the phosphoribosylformylglycinamidine synthase complex involved in the purines biosynthetic pathway. Catalyzes the ATP-dependent conversion of formylglycinamide ribonucleotide (FGAR) and glutamine to yield formylglycinamidine ribonucleotide (FGAM) and glutamate. The FGAM synthase complex is composed of three subunits. PurQ produces an ammonia molecule by converting glutamine to glutamate. PurL transfers the ammonia molecule to FGAR to form FGAM in an ATP-dependent manner. PurS interacts with PurQ and PurL and is thought to assist in the transfer of the ammonia molecule from PurQ to PurL. This is Phosphoribosylformylglycinamidine synthase subunit PurQ from Dehalococcoides mccartyi (strain ATCC BAA-2266 / KCTC 15142 / 195) (Dehalococcoides ethenogenes (strain 195)).